We begin with the raw amino-acid sequence, 299 residues long: Putative arsenical pump-driving ATPase 2 (299 aa).

ATP is bound at residue 8-15 (GKGGVGKT).

The protein belongs to the arsA ATPase family.

The enzyme catalyses arsenite(in) + ATP + H2O = arsenite(out) + ADP + phosphate + H(+). In terms of biological role, anion-transporting ATPase. Catalyzes the extrusion of arsenite. The protein is Putative arsenical pump-driving ATPase 2 (arsA2) of Aquifex aeolicus (strain VF5).